Here is a 167-residue protein sequence, read N- to C-terminus: Thioredoxin-like protein HI_1115 (167 aa).

Residues 10-27 form a helical membrane-spanning segment; that stretch reads GLSLFLTFIVITSILDFV. A Thioredoxin domain is found at 30 to 167; that stretch reads PVVPEEINKI…VRLFFAEFFG (138 aa). Cys69 and Cys72 form a disulfide bridge.

The protein belongs to the thioredoxin family.

Its subcellular location is the cell membrane. The chain is Thioredoxin-like protein HI_1115 from Haemophilus influenzae (strain ATCC 51907 / DSM 11121 / KW20 / Rd).